An 88-amino-acid polypeptide reads, in one-letter code: Antitoxin VapB21 (88 aa).

Antitoxin component of a type II toxin-antitoxin (TA) system. This Mycobacterium tuberculosis (strain CDC 1551 / Oshkosh) protein is Antitoxin VapB21 (vapB21).